A 63-amino-acid chain; its full sequence is SERF-like protein C1705.02 (63 aa).

A compositionally biased stretch (basic and acidic residues) spans 1-13; it reads MSRGNQRDVDRAR. Positions 1–63 are disordered; the sequence is MSRGNQRDVD…EANGGSKGKK (63 aa). Residues 14–24 are compositionally biased toward basic residues; that stretch reads NLKKSQASKKK. A compositionally biased stretch (basic and acidic residues) spans 25–35; sequence QAGDPTKRLEA.

This sequence belongs to the SERF family.

The protein resides in the cytoplasm. It localises to the nucleus. The protein localises to the nucleolus. The chain is SERF-like protein C1705.02 from Schizosaccharomyces pombe (strain 972 / ATCC 24843) (Fission yeast).